We begin with the raw amino-acid sequence, 1302 residues long: Multidrug resistance protein 1 (1302 aa).

A helical membrane pass occupies residues 43–63; sequence GVFEIILLIIGIIGSIGVGCL. The ABC transmembrane type-1 1 domain occupies 51-360; sequence IIGIIGSIGV…ISTPINILNS (310 aa). N-linked (GlcNAc...) asparagine glycosylation is present at Asn-83. Transmembrane regions (helical) follow at residues 118–138, 192–212, 213–233, 292–312, and 331–351; these read LYFA…FFVL, LFQT…KCWD, LTLV…GLGM, IGIG…NALG, and AGTV…LSQI. The ABC transporter 1 domain maps to 395 to 634; it reads IRFEDVQFVY…KGTYYGLVKR (240 aa). 430–437 serves as a coordination point for ATP; the sequence is GASGCGKS. Asn-663 carries an N-linked (GlcNAc...) asparagine glycan. Residues 712–732 traverse the membrane as a helical segment; sequence YIFCTLGLIGGIGAGAAFPFY. The ABC transmembrane type-1 2 domain maps to 713-1022; it reads IFCTLGLIGG…IGNVLPDVGK (310 aa). A glycan (N-linked (GlcNAc...) asparagine) is linked at Asn-751. The helical transmembrane segment at 765–785 threads the bilayer; that stretch reads MIIICIGIITMISFFCYVGLF. Asn-808 carries an N-linked (GlcNAc...) asparagine glycan. Helical transmembrane passes span 841–861 and 862–882; these read VGDI…GLYF and SWKL…FMFI. Residues 1057-1296 enclose the ABC transporter 2 domain; that stretch reads IEFKNIHFRY…KGFYYTLAMQ (240 aa). Position 1092–1099 (1092–1099) interacts with ATP; that stretch reads GASGCGKS.

This sequence belongs to the ABC transporter superfamily. ABCB family. Multidrug resistance exporter (TC 3.A.1.201) subfamily.

It localises to the membrane. The enzyme catalyses ATP + H2O + xenobioticSide 1 = ADP + phosphate + xenobioticSide 2.. Energy-dependent efflux pump responsible for decreased drug accumulation in multidrug resistance parasites. The protein is Multidrug resistance protein 1 of Entamoeba histolytica (strain ATCC 30459 / HM-1:IMSS / ABRM).